The chain runs to 419 residues: Transcription termination factor Rho (419 aa).

The region spanning 48-123 (DIFGDGVLEI…LKVNEVNYDK (76 aa)) is the Rho RNA-BD domain. 3 RNA-binding regions span residues 61–66 (GFGFLR), 78–80 (DIY), and 108–110 (ERY). Residues 169 to 174 (GRGQRG), 181 to 186 (KAGKTI), and Arg212 contribute to the ATP site. An RNA-binding 2 region spans residues 284–288 (VLTGG).

Belongs to the Rho family. In terms of assembly, homohexamer. The homohexamer assembles into an open ring structure.

Functionally, facilitates transcription termination by a mechanism that involves Rho binding to the nascent RNA, activation of Rho's RNA-dependent ATPase activity, and release of the mRNA from the DNA template. The polypeptide is Transcription termination factor Rho (Buchnera aphidicola subsp. Acyrthosiphon pisum (strain APS) (Acyrthosiphon pisum symbiotic bacterium)).